The following is a 350-amino-acid chain: Phosphotriesterase-related protein (350 aa).

Positions 24, 26, 170, 202, 231, and 299 each coordinate a divalent metal cation.

Belongs to the metallo-dependent hydrolases superfamily. Phosphotriesterase family. Requires a divalent metal cation as cofactor.

The sequence is that of Phosphotriesterase-related protein from Nematostella vectensis (Starlet sea anemone).